We begin with the raw amino-acid sequence, 109 residues long: Large ribosomal subunit protein uL22 (109 aa).

It belongs to the universal ribosomal protein uL22 family. As to quaternary structure, part of the 50S ribosomal subunit.

Functionally, this protein binds specifically to 23S rRNA; its binding is stimulated by other ribosomal proteins, e.g. L4, L17, and L20. It is important during the early stages of 50S assembly. It makes multiple contacts with different domains of the 23S rRNA in the assembled 50S subunit and ribosome. Its function is as follows. The globular domain of the protein is located near the polypeptide exit tunnel on the outside of the subunit, while an extended beta-hairpin is found that lines the wall of the exit tunnel in the center of the 70S ribosome. The chain is Large ribosomal subunit protein uL22 from Azoarcus sp. (strain BH72).